The primary structure comprises 378 residues: Apoptosis-inducing factor 1 (378 aa).

Residues 7 to 25 (NIVVVGAGVFGVSVANHLY) traverse the membrane as a helical segment. FAD contacts are provided by residues 12–16 (GAGVF), R51, K56, and D283.

It belongs to the FAD-dependent oxidoreductase family. It depends on FAD as a cofactor.

The protein localises to the mitochondrion outer membrane. It is found in the nucleus. Putative FAD-dependent oxidoreductase involved in the resistance to cercosporin and other singlet oxygen-generating photosensitizers. Translocates from mitochondria to the nucleus under apoptotic conditions, where it degrades DNA and induces apoptosis. This is Apoptosis-inducing factor 1 (AIF1) from Saccharomyces cerevisiae (strain ATCC 204508 / S288c) (Baker's yeast).